Here is a 356-residue protein sequence, read N- to C-terminus: uncharacterized protein (356 aa).

3 consecutive transmembrane segments (helical) span residues 258–275 (SALQ…VFYY), 290–312 (PHWL…TEAL), and 325–347 (LVLL…TLFS).

Its subcellular location is the cell membrane. This is an uncharacterized protein from Archaeoglobus fulgidus (strain ATCC 49558 / DSM 4304 / JCM 9628 / NBRC 100126 / VC-16).